An 831-amino-acid polypeptide reads, in one-letter code: Translation initiation factor IF-2 (831 aa).

Residues 116–157 (IEPLETDKEVEQKQQNTEENKVEVSAKIVQDDEDIPSQIPKK) are disordered. Residues 117 to 139 (EPLETDKEVEQKQQNTEENKVEV) show a composition bias toward basic and acidic residues. One can recognise a tr-type G domain in the interval 329-499 (TRAPVVTVMG…LLIAEMQDLK (171 aa)). Residues 338–345 (GHVDHGKT) are G1. 338 to 345 (GHVDHGKT) is a GTP binding site. The G2 stretch occupies residues 363–367 (GITQH). Positions 385-388 (DTPG) are G3. Residues 385 to 389 (DTPGH) and 439 to 442 (NKID) each bind GTP. The tract at residues 439-442 (NKID) is G4. The segment at 475-477 (SAL) is G5.

This sequence belongs to the TRAFAC class translation factor GTPase superfamily. Classic translation factor GTPase family. IF-2 subfamily.

The protein resides in the cytoplasm. In terms of biological role, one of the essential components for the initiation of protein synthesis. Protects formylmethionyl-tRNA from spontaneous hydrolysis and promotes its binding to the 30S ribosomal subunits. Also involved in the hydrolysis of GTP during the formation of the 70S ribosomal complex. The sequence is that of Translation initiation factor IF-2 from Rickettsia conorii (strain ATCC VR-613 / Malish 7).